Consider the following 139-residue polypeptide: S-adenosylmethionine decarboxylase proenzyme (139 aa).

The active-site Schiff-base intermediate with substrate; via pyruvic acid is the serine 63. Serine 63 bears the Pyruvic acid (Ser); by autocatalysis mark. Histidine 68 acts as the Proton acceptor; for processing activity in catalysis. Cysteine 83 (proton donor; for catalytic activity) is an active-site residue.

Belongs to the prokaryotic AdoMetDC family. Type 1 subfamily. Heterotetramer of two alpha and two beta chains arranged as a dimer of alpha/beta heterodimers. Pyruvate serves as cofactor. Post-translationally, is synthesized initially as an inactive proenzyme. Formation of the active enzyme involves a self-maturation process in which the active site pyruvoyl group is generated from an internal serine residue via an autocatalytic post-translational modification. Two non-identical subunits are generated from the proenzyme in this reaction, and the pyruvate is formed at the N-terminus of the alpha chain, which is derived from the carboxyl end of the proenzyme. The post-translation cleavage follows an unusual pathway, termed non-hydrolytic serinolysis, in which the side chain hydroxyl group of the serine supplies its oxygen atom to form the C-terminus of the beta chain, while the remainder of the serine residue undergoes an oxidative deamination to produce ammonia and the pyruvoyl group blocking the N-terminus of the alpha chain.

The catalysed reaction is S-adenosyl-L-methionine + H(+) = S-adenosyl 3-(methylsulfanyl)propylamine + CO2. The protein operates within amine and polyamine biosynthesis; S-adenosylmethioninamine biosynthesis; S-adenosylmethioninamine from S-adenosyl-L-methionine: step 1/1. Functionally, catalyzes the decarboxylation of S-adenosylmethionine to S-adenosylmethioninamine (dcAdoMet), the propylamine donor required for the synthesis of the polyamines spermine and spermidine from the diamine putrescine. The polypeptide is S-adenosylmethionine decarboxylase proenzyme (Pyrococcus horikoshii (strain ATCC 700860 / DSM 12428 / JCM 9974 / NBRC 100139 / OT-3)).